The chain runs to 444 residues: MSQSYINVIGAGLAGSEAAYQIAKRGIPVKLYEMRGVKATPQHKTTHFAELVCSNSFRGDSLTNAVGLLKEELRRLDSIIMRAGEAHRVPAGGAMAVDREGYAKAVTAELEAHPLVEIIREEVTDIPSDAITVIATGPLTSDSLAEKIHALNGGAGFYFYDAAAPIVDKSTINMDRVYLKSRYDKGEAAYLNCPMTKEEFMAFHEALTTAEEAPLNAFEKEKYFEGCMPIEVMAKRGIKTMLYGPMKPVGLEYPDDYKGPRDGDFKTPYAVVQLRQDNAAGSLYNIVGFQTHLKWGEQKRVFQMIPGLEHAEFVRYGVMHRNSYMDSPKLLTQGFQSRANHRLFFAGQMTGVEGYVESAASGLVAGINAARLFKEEEPLVFPNTTAIGSLPYYITHADSKHFQPMNVNFGIIKELDGPRIRDKKERYEAIAKRALADLAAYLTV.

FAD is bound at residue 10 to 15 (GAGLAG).

It belongs to the MnmG family. TrmFO subfamily. FAD is required as a cofactor.

The protein resides in the cytoplasm. The catalysed reaction is uridine(54) in tRNA + (6R)-5,10-methylene-5,6,7,8-tetrahydrofolate + NADH + H(+) = 5-methyluridine(54) in tRNA + (6S)-5,6,7,8-tetrahydrofolate + NAD(+). It carries out the reaction uridine(54) in tRNA + (6R)-5,10-methylene-5,6,7,8-tetrahydrofolate + NADPH + H(+) = 5-methyluridine(54) in tRNA + (6S)-5,6,7,8-tetrahydrofolate + NADP(+). Functionally, catalyzes the folate-dependent formation of 5-methyl-uridine at position 54 (M-5-U54) in all tRNAs. The polypeptide is Methylenetetrahydrofolate--tRNA-(uracil-5-)-methyltransferase TrmFO (Streptococcus equi subsp. zooepidemicus (strain H70)).